We begin with the raw amino-acid sequence, 138 residues long: Brain natriuretic peptide (138 aa).

An N-terminal signal peptide occupies residues 1 to 22 (MRLSSMWLCSLLLILKLQLSST). Disordered regions lie at residues 50 to 84 (EQMA…AGLD) and 99 to 138 (SVRN…PKQR). Residues C111 and C127 are joined by a disulfide bond.

The protein belongs to the natriuretic peptide family.

The protein localises to the secreted. Cardiac hormone which may function as a paracrine antifibrotic factor in the heart. Also plays a key role in cardiovascular homeostasis through natriuresis, diuresis, vasorelaxation, and inhibition of renin and aldosterone secretion. The polypeptide is Brain natriuretic peptide (nppb) (Oreochromis mossambicus (Mozambique tilapia)).